The sequence spans 476 residues: Bifunctional protein HldE (476 aa).

The interval 1–319 (MKVTLPAFEK…EALKSHQGES (319 aa)) is ribokinase. 195–198 (NMSE) is a binding site for ATP. Residue Asp-264 is part of the active site. Positions 345-476 (MTNGCFDILH…AIIQNIMSRH (132 aa)) are cytidylyltransferase.

It in the N-terminal section; belongs to the carbohydrate kinase PfkB family. The protein in the C-terminal section; belongs to the cytidylyltransferase family. As to quaternary structure, homodimer.

The enzyme catalyses D-glycero-beta-D-manno-heptose 7-phosphate + ATP = D-glycero-beta-D-manno-heptose 1,7-bisphosphate + ADP + H(+). It catalyses the reaction D-glycero-beta-D-manno-heptose 1-phosphate + ATP + H(+) = ADP-D-glycero-beta-D-manno-heptose + diphosphate. The protein operates within nucleotide-sugar biosynthesis; ADP-L-glycero-beta-D-manno-heptose biosynthesis; ADP-L-glycero-beta-D-manno-heptose from D-glycero-beta-D-manno-heptose 7-phosphate: step 1/4. It participates in nucleotide-sugar biosynthesis; ADP-L-glycero-beta-D-manno-heptose biosynthesis; ADP-L-glycero-beta-D-manno-heptose from D-glycero-beta-D-manno-heptose 7-phosphate: step 3/4. Catalyzes the phosphorylation of D-glycero-D-manno-heptose 7-phosphate at the C-1 position to selectively form D-glycero-beta-D-manno-heptose-1,7-bisphosphate. In terms of biological role, catalyzes the ADP transfer from ATP to D-glycero-beta-D-manno-heptose 1-phosphate, yielding ADP-D-glycero-beta-D-manno-heptose. This is Bifunctional protein HldE from Shewanella amazonensis (strain ATCC BAA-1098 / SB2B).